A 1453-amino-acid polypeptide reads, in one-letter code: Collagen alpha-1(I) chain (1453 aa).

Residues 1–22 form the signal peptide; that stretch reads MFSFVDLRLLLLLGATALLTHG. Positions 23–151 are cleaved as a propeptide — N-terminal propeptide; sequence QEDIPEVSCI…PPGLGGNFAS (129 aa). The 59-residue stretch at 29 to 87 folds into the VWFC domain; the sequence is VSCIHNGLRVPNGETWKPEVCLICICHNGTAVCDDVQCNEELDCPNPQRREGECCAFCP. An N-linked (GlcNAc...) asparagine glycan is attached at Asn-56. The interval 94–1210 is disordered; the sequence is NSEDVGVEGP…GGRYYRADDA (1117 aa). Pro residues-rich tracts occupy residues 109–118 and 128–143; these read PQGPRGPVGP and PGLP…PGPP. The segment at 152-167 is nonhelical region (N-terminal); that stretch reads QMSYGYDEKSAGVSVP. Lys-160 carries the allysine modification. The residue at position 161 (Ser-161) is a Phosphoserine. The interval 168–1181 is triple-helical region; it reads GPMGPSGPRG…PGPPGPPGPP (1014 aa). 11 positions are modified to 4-hydroxyproline: Pro-179, Pro-182, Pro-185, Pro-194, Pro-197, Pro-200, Pro-215, Pro-230, Pro-236, Pro-245, and Pro-251. The segment covering 198 to 207 has biased composition (gly residues); sequence GEPGGSGPMG. Over residues 218-232 the composition is skewed to basic and acidic residues; that stretch reads NGDDGEAGKPGRPGE. Residue Lys-254 is modified to 5-hydroxylysine; alternate. An O-linked (Gal...) hydroxylysine; alternate glycan is attached at Lys-254. Phosphoserine is present on Ser-260. The span at 268–284 shows a compositional bias: low complexity; the sequence is DAGPAGPKGEPGSPGEN. 4-hydroxyproline occurs at positions 278, 281, 287, 296, and 302. A compositionally biased stretch (low complexity) spans 307 to 320; it reads TAGARGNDGAVGAA. A compositionally biased stretch (pro residues) spans 322 to 334; that stretch reads PPGPTGPTGPPGF. 4-hydroxyproline occurs at positions 323, 332, 335, 362, 365, 377, 383, 392, 398, 401, and 416. The span at 368–407 shows a compositional bias: low complexity; the sequence is AGAAGPAGNPGADGQPGAKGANGAPGIAGAPGFPGARGPS. The residue at position 419 (Lys-419) is a 5-hydroxylysine. Residues Pro-425, Pro-428, Pro-440, Pro-449, Pro-464, Pro-470, Pro-479, and Pro-485 each carry the 4-hydroxyproline modification. Gly residues predominate over residues 474–483; sequence GERGGPGSRG. Lys-494 is subject to 5-hydroxylysine. Over residues 499–515 the composition is skewed to low complexity; that stretch reads ERGAPGPAGPKGSPGEA. A 4-hydroxyproline mark is found at Pro-503, Pro-512, Pro-518, Pro-524, Pro-533, Pro-536, Pro-545, Pro-554, Pro-560, Pro-572, Pro-581, Pro-590, Pro-593, Pro-611, Pro-629, Pro-635, Pro-641, Pro-647, Pro-653, Pro-659, Pro-671, Pro-680, Pro-692, Pro-704, Pro-707, Pro-713, Pro-719, and Pro-728. A compositionally biased stretch (low complexity) spans 527-566; the sequence is KGLTGSPGSPGPDGKTGPPGPAGQDGRPGPAGPPGARGQA. The span at 623–650 shows a compositional bias: low complexity; it reads QGPAGSPGFQGLPGPAGPPGEAGKPGEQ. 2 stretches are compositionally biased toward low complexity: residues 685 to 695 and 703 to 716; these read PRGNNGAPGND and APGA…PGLQ. The Cell attachment site signature appears at 734–736; it reads RGD. At Lys-740 the chain carries 5-hydroxylysine. Pro-746, Pro-761, and Pro-767 each carry 4-hydroxyproline. Ser-776 is subject to Phosphoserine. 7 positions are modified to 4-hydroxyproline: Pro-788, Pro-797, Pro-806, Pro-812, Pro-830, Pro-839, and Pro-848. The span at 800-815 shows a compositional bias: low complexity; it reads AGFAGPPGADGQPGAK. Residues 829 to 841 are compositionally biased toward pro residues; that stretch reads PPGPAGPAGPPGP. Low complexity predominate over residues 842-872; sequence IGNVGAPGPKGPRGAAGPPGATGFPGAAGRV. Lys-851 carries the post-translational modification 5-hydroxylysine. 4-hydroxyproline is present on residues Pro-860 and Pro-866. At Pro-874 the chain carries 3-hydroxyproline. 4-hydroxyproline is present on residues Pro-875, Pro-884, Pro-887, Pro-908, Pro-917, Pro-926, Pro-935, Pro-953, Pro-962, Pro-965, Pro-971, Pro-986, Pro-992, Pro-998, Pro-1007, and Pro-1013. Low complexity predominate over residues 901–910; the sequence is ETGPAGRPGE. A compositionally biased stretch (low complexity) spans 920 to 935; it reads AGEKGSPGADGPAGSP. The span at 985 to 995 shows a compositional bias: pro residues; the sequence is PPGPMGPPGLA. Residues 997 to 1012 show a composition bias toward low complexity; the sequence is PPGESGREGSPGAEGS. Residue Lys-1022 is modified to 5-hydroxylysine. A compositionally biased stretch (pro residues) spans 1031–1046; the sequence is AGPPGAPGAPGAPGPV. A 4-hydroxyproline mark is found at Pro-1034, Pro-1037, and Pro-1040. A compositionally biased stretch (low complexity) spans 1067–1081; that stretch reads IGPAGARGPAGPQGP. Positions 1082-1084 match the Cell attachment site motif; that stretch reads RGD. Over residues 1082–1096 the composition is skewed to basic and acidic residues; sequence RGDKGETGEQGDRGI. Lys-1085 carries the post-translational modification 5-hydroxylysine. At Lys-1097 the chain carries 5-hydroxylysine; alternate. A glycan (O-linked (Gal...) hydroxylysine; alternate) is linked at Lys-1097. Positions 1102–1148 are enriched in low complexity; that stretch reads FSGLQGPPGSPGSPGEQGPSGASGPAGPRGPPGSAGSPGKDGLNGLP. Pro-1109, Pro-1112, Pro-1115, Pro-1133, and Pro-1148 each carry 4-hydroxyproline. The residue at position 1153 (Pro-1153) is a 3-hydroxyproline. Pro-1154 is subject to 4-hydroxyproline. The segment covering 1166–1181 has biased composition (pro residues); the sequence is AGPPGPPGPPGPPGPP. At Pro-1168 the chain carries 3-hydroxyproline. Residue Pro-1169 is modified to 4-hydroxyproline. Pro-1171 carries the post-translational modification 3-hydroxyproline. 4-hydroxyproline is present on Pro-1172. The residue at position 1174 (Pro-1174) is a 3-hydroxyproline. 4-hydroxyproline is present on residues Pro-1175, Pro-1178, and Pro-1181. Residues 1182 to 1207 are nonhelical region (C-terminal); it reads SGGYDFSFLPQPPQEKSQDGGRYYRA. Lys-1197 carries the post-translational modification Allysine. Positions 1197–1210 are enriched in basic and acidic residues; it reads KSQDGGRYYRADDA. A propeptide spans 1208–1453 (C-terminal propeptide); sequence DDANVVRDRD…GLDIGPACFV (246 aa). The Fibrillar collagen NC1 domain occupies 1218-1453; the sequence is LEVDTTLKSL…GLDIGPACFV (236 aa). 3 disulfide bridges follow: Cys-1248–Cys-1280, Cys-1288–Cys-1451, and Cys-1359–Cys-1404. Positions 1266, 1268, 1269, 1271, and 1274 each coordinate Ca(2+). Asn-1354 carries N-linked (GlcNAc...) asparagine glycosylation.

This sequence belongs to the fibrillar collagen family. In terms of assembly, trimers of one alpha 2(I) and two alpha 1(I) chains. Interacts with MRC2. Interacts with TRAM2. Interacts with MFAP4 in a Ca (2+)-dependent manner. In terms of processing, contains mostly 4-hydroxyproline. Proline residues at the third position of the tripeptide repeating unit (G-X-Y) are hydroxylated in some or all of the chains. Contains 3-hydroxyproline at a few sites. This modification occurs on the first proline residue in the sequence motif Gly-Pro-Hyp, where Hyp is 4-hydroxyproline. Post-translationally, lysine residues at the third position of the tripeptide repeating unit (G-X-Y) are 5-hydroxylated in some or all of the chains. In terms of processing, O-glycosylated on hydroxylated lysine residues. The O-linked glycan consists of a Glc-Gal disaccharide. Forms the fibrils of tendon, ligaments and bones. In bones the fibrils are mineralized with calcium hydroxyapatite.

Its subcellular location is the secreted. The protein localises to the extracellular space. It is found in the extracellular matrix. Its function is as follows. Type I collagen is a member of group I collagen (fibrillar forming collagen). The chain is Collagen alpha-1(I) chain from Mus musculus (Mouse).